The primary structure comprises 268 residues: Methionine aminopeptidase (268 aa).

Position 79 (His-79) interacts with substrate. Residues Asp-97, Asp-108, and His-172 each contribute to the a divalent metal cation site. Residue His-179 coordinates substrate. Residues Glu-205 and Glu-236 each coordinate a divalent metal cation.

Belongs to the peptidase M24A family. Methionine aminopeptidase type 1 subfamily. Monomer. The cofactor is Co(2+). Zn(2+) is required as a cofactor. Mn(2+) serves as cofactor. Requires Fe(2+) as cofactor.

It carries out the reaction Release of N-terminal amino acids, preferentially methionine, from peptides and arylamides.. In terms of biological role, removes the N-terminal methionine from nascent proteins. The N-terminal methionine is often cleaved when the second residue in the primary sequence is small and uncharged (Met-Ala-, Cys, Gly, Pro, Ser, Thr, or Val). Requires deformylation of the N(alpha)-formylated initiator methionine before it can be hydrolyzed. The sequence is that of Methionine aminopeptidase from Haemophilus influenzae (strain ATCC 51907 / DSM 11121 / KW20 / Rd).